Here is a 407-residue protein sequence, read N- to C-terminus: Aurora kinase (407 aa).

Disordered stretches follow at residues 1–43 (MTPT…STSS) and 66–137 (ERQG…TQSK). Composition is skewed to low complexity over residues 31–43 (SAST…STSS) and 126–136 (STTTTMTSTQS). In terms of domain architecture, Protein kinase spans 147 to 399 (FDIGRPLGKG…LEGVIAHAWI (253 aa)). Residues Lys157, Lys176, and 224–227 (LEYA) each bind ATP. Asp272 (proton acceptor) is an active-site residue. Asp290 contributes to the ATP binding site.

This sequence belongs to the protein kinase superfamily. Ser/Thr protein kinase family.

The protein localises to the cytoplasm. The protein resides in the cytoskeleton. Its subcellular location is the spindle. It localises to the midbody. It is found in the microtubule organizing center. The protein localises to the centrosome. The protein resides in the nucleus. Its subcellular location is the chromosome. It localises to the centromere. It carries out the reaction L-seryl-[protein] + ATP = O-phospho-L-seryl-[protein] + ADP + H(+). The enzyme catalyses L-threonyl-[protein] + ATP = O-phospho-L-threonyl-[protein] + ADP + H(+). Cdc2 activity is required for activation. Serine/threonine protein kinase that contributes to the regulation of cell cycle progression. Involved in meiotic apparatus formation and polar body extrusion. Contributes to Plk1 activation and phosphorylation of histone H3 at 'Ser-10' during meiosis I. Required for accurate progression of early embryonic M phase. Involved in chromosome alignment and cleavage furrow formation during early embryonic cycles. May be involved in mitotic spindle formation and cytokinesis. This Patiria pectinifera (Starfish) protein is Aurora kinase.